Reading from the N-terminus, the 37-residue chain is Large ribosomal subunit protein bL36c (37 aa).

It belongs to the bacterial ribosomal protein bL36 family.

It localises to the plastid. The protein resides in the chloroplast. The sequence is that of Large ribosomal subunit protein bL36c from Pleurastrum terricola (Filamentous green alga).